The sequence spans 243 residues: Ribosomal RNA small subunit methyltransferase J (243 aa).

S-adenosyl-L-methionine-binding positions include 112–113 and aspartate 164; that span reads ER.

This sequence belongs to the methyltransferase superfamily. RsmJ family.

The protein localises to the cytoplasm. The enzyme catalyses guanosine(1516) in 16S rRNA + S-adenosyl-L-methionine = N(2)-methylguanosine(1516) in 16S rRNA + S-adenosyl-L-homocysteine + H(+). Functionally, specifically methylates the guanosine in position 1516 of 16S rRNA. The sequence is that of Ribosomal RNA small subunit methyltransferase J from Legionella pneumophila subsp. pneumophila (strain Philadelphia 1 / ATCC 33152 / DSM 7513).